Consider the following 508-residue polypeptide: Maturase K (508 aa).

It belongs to the intron maturase 2 family. MatK subfamily.

It localises to the plastid. The protein localises to the chloroplast. Functionally, usually encoded in the trnK tRNA gene intron. Probably assists in splicing its own and other chloroplast group II introns. This Amburana cearensis (Cerejeira) protein is Maturase K.